A 632-amino-acid polypeptide reads, in one-letter code: Probable potassium transport system protein Kup (632 aa).

12 consecutive transmembrane segments (helical) span residues 19–39 (LLCL…PLYV), 57–77 (VIGI…LKYV), 111–131 (ILFL…VITP), 147–167 (PLLQ…LFML), 175–195 (IGAL…LVGL), 213–233 (AFAF…AVVL), 257–277 (WYGG…ALLL), 286–306 (PFFL…ATAA), 347–367 (IYIP…VLGF), 376–396 (AYGV…FFVL), 404–424 (FLLG…FFSA), and 429–449 (VAQG…IMIT).

This sequence belongs to the HAK/KUP transporter (TC 2.A.72) family.

Its subcellular location is the cell inner membrane. The catalysed reaction is K(+)(in) + H(+)(in) = K(+)(out) + H(+)(out). In terms of biological role, transport of potassium into the cell. Likely operates as a K(+):H(+) symporter. The polypeptide is Probable potassium transport system protein Kup (Nitrosospira multiformis (strain ATCC 25196 / NCIMB 11849 / C 71)).